The following is a 173-amino-acid chain: Shikimate kinase 1 (173 aa).

Residue 14–19 (GAGKST) participates in ATP binding. Serine 18 is a Mg(2+) binding site. Residues aspartate 36, arginine 60, and glycine 82 each contribute to the substrate site. Residue arginine 120 participates in ATP binding. Residue arginine 140 participates in substrate binding.

Belongs to the shikimate kinase family. In terms of assembly, monomer. It depends on Mg(2+) as a cofactor.

The protein localises to the cytoplasm. The enzyme catalyses shikimate + ATP = 3-phosphoshikimate + ADP + H(+). It participates in metabolic intermediate biosynthesis; chorismate biosynthesis; chorismate from D-erythrose 4-phosphate and phosphoenolpyruvate: step 5/7. In terms of biological role, catalyzes the specific phosphorylation of the 3-hydroxyl group of shikimic acid using ATP as a cosubstrate. This is Shikimate kinase 1 from Hamiltonella defensa subsp. Acyrthosiphon pisum (strain 5AT).